A 786-amino-acid chain; its full sequence is Endonuclease MutS2 (786 aa).

332–339 (GPNTGGKT) is a binding site for ATP. Positions 711-786 (IDLRGMDSME…GTGVTVVELK (76 aa)) constitute a Smr domain.

It belongs to the DNA mismatch repair MutS family. MutS2 subfamily. Homodimer. Binds to stalled ribosomes, contacting rRNA.

Its function is as follows. Endonuclease that is involved in the suppression of homologous recombination and thus may have a key role in the control of bacterial genetic diversity. Functionally, acts as a ribosome collision sensor, splitting the ribosome into its 2 subunits. Detects stalled/collided 70S ribosomes which it binds and splits by an ATP-hydrolysis driven conformational change. Acts upstream of the ribosome quality control system (RQC), a ribosome-associated complex that mediates the extraction of incompletely synthesized nascent chains from stalled ribosomes and their subsequent degradation. Probably generates substrates for RQC. The protein is Endonuclease MutS2 of Clostridium tetani (strain Massachusetts / E88).